A 2542-amino-acid polypeptide reads, in one-letter code: MSYPFGKEETTTEKQLFEFFCECLRRGDWELAQACVPQLQRGQGEIPQKVEDILQALVQCPILLRCGPDINPQRLAWLWLLVLEKWLPPEKKLLSTVFRRKLEFLFLSEDLQGGIPETILKELFETLAQGPAGCTSDRSQRWESGAPQLSPEAVSMLWNLLKQAPGPAQALLELLLEERHSASLCHSSLQKSLLDLIRKALQTLRDPASQPAGVTDAVCGALQALCCTAELPEGEWHVLCEELLETCRTEGSPLKEERLLGCLLHKAGRSLLSLYGHTYAEKVAERPPKASLSGKDHPDPERAMLALFSTPDPAHAWKMAFFYCLSNNKHFLEQILVTALTLLKEEDFPSLGYLLDREFRPLSHLLVLLGWTHCQSLESAKRLLQTLYRNQDQGHDELLRDACEGLWAHLEVLEWCVQQSSSLIPKRELLCHLHGGDSHSVLYSLHHLTNLPALREEEVLKLLQKVPTKDLQGEHDTHDASVPEHLSQCQSLTLYQGFCAMKYAVYALCVNSHQHSQCPDCRDSASSEELALVEPGRDSLPSPGASHLFPTYLARCRQYLQRIPDSLCLEILENIFSLLLITSADLHPEPHLPEDYAEDDDIEGKGPWGLWSPSESPQHIAATERRSERASMGPRDLAPTGPGCPKGEPKDNSPGPHTHSFLDLKHFTSSLSGFLADEFAIGAFLSLIQEQLNELSSHRTPEETELLEDQSCWAARDGLQGRLHRFSKVLSEAQWRYKVVTSNQSSEEQPSRRYRPTAKRHSSLRRGRRTRRTRADGRERGSNPSLEGTSSELSTSTSEGSLSAVSGQVEADNRFQPQPQSSIIPMMFSPPESLLASCILRGNFAEAHQVVLMFNLKSSPSAGELMFVERYQEVIQELARVEHKIENQNSDGGNNTVRRTGSGRSTLQAIGSAAAAGMVFYSISDVTDKLLSPSEDPIPTLQEDFWINAALTETNTPLRGVLEDLSPPAMAAFDLACCQCQLWKTCKQLLETAERRLSSSLEGRGRRLDQVVLNPDGMRGFPFVLQQISKILSYPLTVTGLTKSETLEERGGGAPRCSISELLQMCWPSLTEDCIASHTSLSQQLDQALQSLREALTLSEPKSTPLTCLVEQAAQKAPEAEAHPVHIQSQLLQKTLGKQTLAGPRQTDYVGAFFSYCSSLAKVLLRSLSSDPDNVEVKVGNPFVLLQQSSSQLVSHLLLERQVPPDRLAALLAQEHLNLSVPQVIVSCCCEPLTLCLSRQSQQASSLTAHLGMLAQGHASHLLDGLPLSVLGSPRPSENPSAERKSDSSPKDSLPAFTASALAFLKSRSKILAMVACLRASRGTKVSRPSLSWKELRGRREAPLTAEKVAQECEHLLEQFPVFEAALLANWEPLQQASESRPSLAASLCGQARLSTVLLGLHSTLAQDVVTEAFEEALVARDWPRALQLIDVYGQDSDDLSSVRDSVLTCATVCDKEGWQYLFPVKDASLRSQLALRFVDKWPLESCLEILAYCVSDMAVPEELKSELQRKLTELRVYQKILGLQDPPVWCDWQTLRSCCAEDPSTVMDMMLGSQEYELCEEWGCLYPIPREHLVSLHHKHLLYLLERREYEKALQLLQRIPDPTMCLEVTERSLDQHPSLATSHFLANYLTSHFYGELTTDRHHEIQALYMGSKVLLTLPEQHRASYAHLSSSPLLMLEQLLMNMKVDWATTAVQTLQQLLAGQDIGFTLDEVDSLLSRYAGKALDLPYPLREKRSDSMIHLQEPVHQASDPETLSRSSSAEFSAAAAAPAPAAPGSALVCSPSPKERAFPQTQPPLEFVPPETPPARDQWVPDETESMCMVCCREHFTMFNRRHHCRRCGRLVCGSCSTKKMVVEGCRENPTRVCDQCYSYYNKDAPEESPCQSEVPDSAKNESPSYSAVVRIPKATEVEWILSLNEEENELVRSEFYYEQAPSASLCIAILNLHRDSIACGHQLIEHCCRLSRGLTNPEVDAGLLIDIMKQLLFSAKMMFVKAGQSQDLALCDSYISKVDVLHILVAAAYRHMPSLDQILQPASVTRLRNQLLEAEYYQLGVEVSTKTGLDSTGAWHAWGMACLKAGNLTAAREKFSRCLKPPLDLNQLSHGSRLVQDVVEYLESTVRPLVSLQDDDYFATLRELEATLRTQSLFLEAIPDGKIMNNTYYQECLFYLHNYSTNLAIISFYMRHNCLREALLHLLNKESPAEVFIEGIFQPSYKSGKLHTLENLLESIDPTLESWGAYLIAACQHLQKKNYYHILYELQQFMKDQVRAAMTCIRFFSHKAKSYTELGEKLSWLLKAKDHLKIYLQENSRSSGRKKTTFFRKKMAAADVSRHMNTLQLQMEVTRFLHRCESARTSQITTLPLPTLFGNNHMKMEVACQVMLGGKNVEDGFGIAFRVLQDFQLDAAVTYCRAARQLVEKEKYGEIRQLLKCVSESGMAAKSDGDTILLNCLEAFKRIPPQELEGLIQAIHSDDNKVRAYLTCCKLRSAYLIAVKQEHTQAAALVQQVQQAAKSSGDSVVQDICAQWLLTSHSRGAHGSGSRK.

2 disordered regions span residues 591-658 and 740-811; these read HLPE…GPHT and VTSN…QVEA. 2 positions are modified to phosphoserine: Ser612 and Ser616. Residues 752-772 show a composition bias toward basic residues; that stretch reads RRYRPTAKRHSSLRRGRRTRR. The span at 785–803 shows a compositional bias: low complexity; it reads SLEGTSSELSTSTSEGSLS. The residue at position 798 (Ser798) is a Phosphoserine. The stretch at 866-891 forms a coiled coil; that stretch reads MFVERYQEVIQELARVEHKIENQNSD. The interval 1273–1292 is disordered; the sequence is SPRPSENPSAERKSDSSPKD. Over residues 1281–1290 the composition is skewed to basic and acidic residues; it reads SAERKSDSSP. A coiled-coil region spans residues 1495–1522; the sequence is VSDMAVPEELKSELQRKLTELRVYQKIL. Ser1739, Ser1761, Ser1783, and Ser1785 each carry phosphoserine. The disordered stretch occupies residues 1746–1807; that stretch reads PVHQASDPET…LEFVPPETPP (62 aa). Residues 1757–1779 show a composition bias toward low complexity; it reads SRSSSAEFSAAAAAPAPAAPGSA. The FYVE-type zinc-finger motif lies at 1815–1875; that stretch reads DETESMCMVC…VCDQCYSYYN (61 aa). Residues Cys1821, Cys1824, Cys1838, Cys1841, Cys1846, Cys1849, Cys1867, and Cys1870 each coordinate Zn(2+).

Belongs to the ZFYVE26 family. In terms of assembly, interacts with AP5Z1, AP5B1, AP5S1 and SPG11. Interacts with TTC19 and KIF13A.

Its subcellular location is the cytoplasm. The protein localises to the cytoskeleton. It is found in the microtubule organizing center. It localises to the centrosome. The protein resides in the midbody. Functionally, phosphatidylinositol 3-phosphate-binding protein required for the abscission step in cytokinesis: recruited to the midbody during cytokinesis and acts as a regulator of abscission. May also be required for efficient homologous recombination DNA double-strand break repair. The protein is Zinc finger FYVE domain-containing protein 26 (Zfyve26) of Rattus norvegicus (Rat).